The following is a 175-amino-acid chain: Ribonuclease M5 (175 aa).

The Toprim domain maps to Asn3–Ser83. Residues Glu9, Asp57, and Asp59 each contribute to the Mg(2+) site.

It belongs to the ribonuclease M5 family. Requires Mg(2+) as cofactor.

Its subcellular location is the cytoplasm. The catalysed reaction is Endonucleolytic cleavage of RNA, removing 21 and 42 nucleotides, respectively, from the 5'- and 3'-termini of a 5S-rRNA precursor.. Required for correct processing of both the 5' and 3' ends of 5S rRNA precursor. Cleaves both sides of a double-stranded region yielding mature 5S rRNA in one step. The chain is Ribonuclease M5 from Mesoplasma florum (strain ATCC 33453 / NBRC 100688 / NCTC 11704 / L1) (Acholeplasma florum).